The chain runs to 307 residues: NADH-ubiquinone oxidoreductase chain 2 (307 aa).

Helical transmembrane passes span 1–21 (MTLQ…LSMT), 25–45 (WIII…YYML), 58–78 (YFLI…YIFV), 88–108 (FIFI…FWII), 119–139 (IGIV…HMGC), 144–164 (MLNL…LIGM), 193–213 (LFKY…FLYL), 217–237 (MSIS…LFIG), 250–270 (LWFI…VYYL), and 287–307 (HYKM…LFLT).

Belongs to the complex I subunit 2 family.

It is found in the mitochondrion inner membrane. The enzyme catalyses a ubiquinone + NADH + 5 H(+)(in) = a ubiquinol + NAD(+) + 4 H(+)(out). Core subunit of the mitochondrial membrane respiratory chain NADH dehydrogenase (Complex I) that is believed to belong to the minimal assembly required for catalysis. Complex I functions in the transfer of electrons from NADH to the respiratory chain. The immediate electron acceptor for the enzyme is believed to be ubiquinone. The protein is NADH-ubiquinone oxidoreductase chain 2 (ND2) of Albinaria caerulea (Land snail).